Here is a 270-residue protein sequence, read N- to C-terminus: Tryptophan synthase alpha chain (270 aa).

Residues Glu60 and Asp71 each act as proton acceptor in the active site.

Belongs to the TrpA family. Tetramer of two alpha and two beta chains.

The enzyme catalyses (1S,2R)-1-C-(indol-3-yl)glycerol 3-phosphate + L-serine = D-glyceraldehyde 3-phosphate + L-tryptophan + H2O. It functions in the pathway amino-acid biosynthesis; L-tryptophan biosynthesis; L-tryptophan from chorismate: step 5/5. Its function is as follows. The alpha subunit is responsible for the aldol cleavage of indoleglycerol phosphate to indole and glyceraldehyde 3-phosphate. This chain is Tryptophan synthase alpha chain, found in Deinococcus radiodurans (strain ATCC 13939 / DSM 20539 / JCM 16871 / CCUG 27074 / LMG 4051 / NBRC 15346 / NCIMB 9279 / VKM B-1422 / R1).